The following is a 419-amino-acid chain: Gamma-glutamyl phosphate reductase (419 aa).

Belongs to the gamma-glutamyl phosphate reductase family.

The protein resides in the cytoplasm. It catalyses the reaction L-glutamate 5-semialdehyde + phosphate + NADP(+) = L-glutamyl 5-phosphate + NADPH + H(+). Its pathway is amino-acid biosynthesis; L-proline biosynthesis; L-glutamate 5-semialdehyde from L-glutamate: step 2/2. Catalyzes the NADPH-dependent reduction of L-glutamate 5-phosphate into L-glutamate 5-semialdehyde and phosphate. The product spontaneously undergoes cyclization to form 1-pyrroline-5-carboxylate. This is Gamma-glutamyl phosphate reductase from Nitratidesulfovibrio vulgaris (strain ATCC 29579 / DSM 644 / CCUG 34227 / NCIMB 8303 / VKM B-1760 / Hildenborough) (Desulfovibrio vulgaris).